A 356-amino-acid polypeptide reads, in one-letter code: DNA-directed RNA polymerase subunit alpha (356 aa).

Positions 1-259 (MIKAAATLKS…KLMTACLTTL (259 aa)) are alpha N-terminal domain (alpha-NTD). The interval 277-356 (FVQVNYNKME…STYGIELKED (80 aa)) is alpha C-terminal domain (alpha-CTD).

Belongs to the RNA polymerase alpha chain family. In terms of assembly, in plastids the minimal PEP RNA polymerase catalytic core is composed of four subunits: alpha, beta, beta', and beta''. When a (nuclear-encoded) sigma factor is associated with the core the holoenzyme is formed, which can initiate transcription.

It is found in the plastid. Its subcellular location is the chloroplast. It carries out the reaction RNA(n) + a ribonucleoside 5'-triphosphate = RNA(n+1) + diphosphate. Its function is as follows. DNA-dependent RNA polymerase catalyzes the transcription of DNA into RNA using the four ribonucleoside triphosphates as substrates. This is DNA-directed RNA polymerase subunit alpha from Ostreococcus tauri.